Here is a 353-residue protein sequence, read N- to C-terminus: Photosystem II protein D1 (353 aa).

T2 carries the post-translational modification N-acetylthreonine. At T2 the chain carries Phosphothreonine. Helical transmembrane passes span 29-46 (YIGWFGVLMIPTLLTATS), 118-133 (HFLLGVACYMGREWEL), and 142-156 (WIAVAYSAPVAAATA). H118 is a binding site for chlorophyll a. Y126 contacts pheophytin a. D170 and E189 together coordinate [CaMn4O5] cluster. The helical transmembrane segment at 197 to 218 (FHMLGVAGVFGGSLFSAMHGSL) threads the bilayer. H198 provides a ligand contact to chlorophyll a. Residues H215 and 264–265 (SF) contribute to the a quinone site. H215 provides a ligand contact to Fe cation. A Fe cation-binding site is contributed by H272. A helical transmembrane segment spans residues 274 to 288 (FLAAWPVVGIWFTAL). [CaMn4O5] cluster-binding residues include H332, E333, D342, and A344. The propeptide occupies 345 to 353 (AVEAPSING).

Belongs to the reaction center PufL/M/PsbA/D family. PSII is composed of 1 copy each of membrane proteins PsbA, PsbB, PsbC, PsbD, PsbE, PsbF, PsbH, PsbI, PsbJ, PsbK, PsbL, PsbM, PsbT, PsbX, PsbY, PsbZ, Psb30/Ycf12, at least 3 peripheral proteins of the oxygen-evolving complex and a large number of cofactors. It forms dimeric complexes. The D1/D2 heterodimer binds P680, chlorophylls that are the primary electron donor of PSII, and subsequent electron acceptors. It shares a non-heme iron and each subunit binds pheophytin, quinone, additional chlorophylls, carotenoids and lipids. D1 provides most of the ligands for the Mn4-Ca-O5 cluster of the oxygen-evolving complex (OEC). There is also a Cl(-1) ion associated with D1 and D2, which is required for oxygen evolution. The PSII complex binds additional chlorophylls, carotenoids and specific lipids. is required as a cofactor. In terms of processing, tyr-161 forms a radical intermediate that is referred to as redox-active TyrZ, YZ or Y-Z. C-terminally processed by CTPA; processing is essential to allow assembly of the oxygen-evolving complex and thus photosynthetic growth.

It localises to the plastid. Its subcellular location is the chloroplast thylakoid membrane. The enzyme catalyses 2 a plastoquinone + 4 hnu + 2 H2O = 2 a plastoquinol + O2. Its function is as follows. Photosystem II (PSII) is a light-driven water:plastoquinone oxidoreductase that uses light energy to abstract electrons from H(2)O, generating O(2) and a proton gradient subsequently used for ATP formation. It consists of a core antenna complex that captures photons, and an electron transfer chain that converts photonic excitation into a charge separation. The D1/D2 (PsbA/PsbD) reaction center heterodimer binds P680, the primary electron donor of PSII as well as several subsequent electron acceptors. In Illicium oligandrum (Star anise), this protein is Photosystem II protein D1.